The sequence spans 378 residues: Protein SLG1 (378 aa).

An N-terminal signal peptide occupies residues 1–21; the sequence is MRPNKTSLLLALLSILSQANA. The WSC domain occupies 22-110; the sequence is YEYVNCFSSL…EDAYSVYQLD (89 aa). Residues 22-264 are Extracellular-facing; the sequence is YEYVNCFSSL…THKKKANVGA (243 aa). N-linked (GlcNAc...) asparagine glycosylation occurs at Asn65. Disordered stretches follow at residues 115-201 and 236-256; these read SNSI…TSST and QNSGSATGTAGSDSTSGSKTH. Over residues 236–253 the composition is skewed to low complexity; it reads QNSGSATGTAGSDSTSGS. Residues 265–285 form a helical membrane-spanning segment; sequence IVGGVVGGVVGAVAIALCILL. Over 286 to 378 the chain is Cytoplasmic; it reads IVRHINMKRE…LTVVNPDEAD (93 aa). Residues 318–378 form a disordered region; it reads ASSFSSNHGP…LTVVNPDEAD (61 aa). Low complexity predominate over residues 319-331; sequence SSFSSNHGPSSGS. Phosphoserine is present on residues Ser331 and Ser353.

In terms of processing, glycosylated. Phosphorylated. Phosphorylation serves a negative regulatory role.

The protein localises to the cell membrane. Functionally, plays a role during G1 to regulate entering or exiting the cell cycle. Involved in stress responses. Has a role in cell wall integrity signaling. Activates ROM1 or ROM2 catalyzed guanine nucleotide exchange toward RHO1. Important regulator of the actin cytoskeleton rearrangements in conditions of cell wall expansion and membrane stretching. Specifically required for the actin reorganization induced by hypo-osmotic shock. Multicopy suppressor of 1,3-beta-glucan synthase (GS). Activates GS upstream of RHO1. Acts positively on the PKC1-MAPK pathway. Activates transiently SLT2 during alkaline stress, which leads to an increase in the expression of several specific genes. This is Protein SLG1 (SLG1) from Saccharomyces cerevisiae (strain ATCC 204508 / S288c) (Baker's yeast).